We begin with the raw amino-acid sequence, 315 residues long: Olfactory receptor 8J3 (315 aa).

Topologically, residues 1 to 25 are extracellular; it reads MAPENFTRVTEFILTGVSSCPELQI. Residue Asn5 is glycosylated (N-linked (GlcNAc...) asparagine). Residues 26-46 form a helical membrane-spanning segment; that stretch reads PLFLVFLVLYVLTMAGNLGII. The Cytoplasmic segment spans residues 47–54; that stretch reads TLTSVDSR. Residues 55–75 traverse the membrane as a helical segment; sequence LQNPMYFFLRHLAIINLGNST. Residues 76–99 are Extracellular-facing; sequence VIAPKMLMNFLVKKKTTSFYECAT. Cys97 and Cys189 are joined by a disulfide. A helical transmembrane segment spans residues 100-120; the sequence is QLGGFLFFIVSEVMMLAVMAY. Residues 121–139 are Cytoplasmic-facing; sequence DRYVAICNPLLYMVVVSRR. The chain crosses the membrane as a helical span at residues 140-160; sequence LCLLLVSLTYLYGFSTAIVVS. The Extracellular portion of the chain corresponds to 161–197; it reads PCIFSVSYCSSNIINHFYCDIAPLLALSCSDTYIPET. The helical transmembrane segment at 198–217 threads the bilayer; the sequence is IVFISAATNLVFSMITVLVS. At 218–237 the chain is on the cytoplasmic side; the sequence is YFNIVLSILRIRSPEGRKKA. The chain crosses the membrane as a helical span at residues 238–258; that stretch reads FSTCASHMIAVTVFYGTMLFM. Over 259 to 271 the chain is Extracellular; the sequence is YLQPQTNHSLDTD. Asn265 carries an N-linked (GlcNAc...) asparagine glycan. The helical transmembrane segment at 272-292 threads the bilayer; it reads KMASVFYTLVIPMLNPLIYSL. The Cytoplasmic segment spans residues 293 to 315; it reads RNNDVNVALKKFMENPCYSFKSM.

This sequence belongs to the G-protein coupled receptor 1 family.

It is found in the cell membrane. In terms of biological role, odorant receptor. This is Olfactory receptor 8J3 (OR8J3) from Homo sapiens (Human).